A 459-amino-acid polypeptide reads, in one-letter code: Bifunctional protein GlmU (459 aa).

Residues 1–230 (MSNRFAVILA…FDETLGVNDR (230 aa)) are pyrophosphorylase. UDP-N-acetyl-alpha-D-glucosamine is bound by residues 9–12 (LAAG), lysine 23, glutamine 73, and 78–79 (GT). Aspartate 103 provides a ligand contact to Mg(2+). Positions 140, 155, 170, and 228 each coordinate UDP-N-acetyl-alpha-D-glucosamine. Asparagine 228 provides a ligand contact to Mg(2+). Positions 231 to 251 (VALSQAEVIMKNRINHKNMVN) are linker. The segment at 252-459 (GVTIIDPSNT…VDQLLNKKKS (208 aa)) is N-acetyltransferase. 2 residues coordinate UDP-N-acetyl-alpha-D-glucosamine: arginine 333 and lysine 351. Histidine 363 (proton acceptor) is an active-site residue. UDP-N-acetyl-alpha-D-glucosamine is bound by residues tyrosine 366 and asparagine 377. Acetyl-CoA-binding positions include 386-387 (NY), alanine 423, and arginine 440.

It in the N-terminal section; belongs to the N-acetylglucosamine-1-phosphate uridyltransferase family. This sequence in the C-terminal section; belongs to the transferase hexapeptide repeat family. Homotrimer. Mg(2+) is required as a cofactor.

The protein localises to the cytoplasm. It carries out the reaction alpha-D-glucosamine 1-phosphate + acetyl-CoA = N-acetyl-alpha-D-glucosamine 1-phosphate + CoA + H(+). It catalyses the reaction N-acetyl-alpha-D-glucosamine 1-phosphate + UTP + H(+) = UDP-N-acetyl-alpha-D-glucosamine + diphosphate. It functions in the pathway nucleotide-sugar biosynthesis; UDP-N-acetyl-alpha-D-glucosamine biosynthesis; N-acetyl-alpha-D-glucosamine 1-phosphate from alpha-D-glucosamine 6-phosphate (route II): step 2/2. It participates in nucleotide-sugar biosynthesis; UDP-N-acetyl-alpha-D-glucosamine biosynthesis; UDP-N-acetyl-alpha-D-glucosamine from N-acetyl-alpha-D-glucosamine 1-phosphate: step 1/1. The protein operates within bacterial outer membrane biogenesis; LPS lipid A biosynthesis. Catalyzes the last two sequential reactions in the de novo biosynthetic pathway for UDP-N-acetylglucosamine (UDP-GlcNAc). The C-terminal domain catalyzes the transfer of acetyl group from acetyl coenzyme A to glucosamine-1-phosphate (GlcN-1-P) to produce N-acetylglucosamine-1-phosphate (GlcNAc-1-P), which is converted into UDP-GlcNAc by the transfer of uridine 5-monophosphate (from uridine 5-triphosphate), a reaction catalyzed by the N-terminal domain. This chain is Bifunctional protein GlmU, found in Bacillus cytotoxicus (strain DSM 22905 / CIP 110041 / 391-98 / NVH 391-98).